The primary structure comprises 472 residues: Ribosomal protein uS12 methylthiotransferase RimO (472 aa).

The MTTase N-terminal domain maps to Pro-22–Ala-133. [4Fe-4S] cluster-binding residues include Cys-31, Cys-67, Cys-96, Cys-171, Cys-175, and Cys-178. The Radical SAM core domain maps to Thr-157–Glu-386. The region spanning Gln-389–Asp-460 is the TRAM domain.

This sequence belongs to the methylthiotransferase family. RimO subfamily. [4Fe-4S] cluster is required as a cofactor.

The protein localises to the cytoplasm. It catalyses the reaction L-aspartate(89)-[ribosomal protein uS12]-hydrogen + (sulfur carrier)-SH + AH2 + 2 S-adenosyl-L-methionine = 3-methylsulfanyl-L-aspartate(89)-[ribosomal protein uS12]-hydrogen + (sulfur carrier)-H + 5'-deoxyadenosine + L-methionine + A + S-adenosyl-L-homocysteine + 2 H(+). Functionally, catalyzes the methylthiolation of an aspartic acid residue of ribosomal protein uS12. In Prochlorococcus marinus (strain MIT 9303), this protein is Ribosomal protein uS12 methylthiotransferase RimO.